The following is a 318-amino-acid chain: RNA polymerase II transcription factor B subunit 3 (318 aa).

The RING-type zinc finger occupies 13 to 54 (CPLCQADRYLNPNMKLLINPECYHKMCESCVDRIFTTGPAQC).

In terms of assembly, one of the nine subunits forming the core-TFIIH basal transcription factor. Also interacts with skp1 and with the mcs2-mcs6 complex.

Its subcellular location is the cytoplasm. The protein resides in the nucleus. Functionally, acts as a component of the general transcription and DNA repair factor IIH (TFIIH or factor B), which is essential for both basal and activated transcription, and is involved in nucleotide excision repair (NER) of damaged DNA. TFIIH has CTD kinase activity and DNA-dependent ATPase activity, and is essential for polymerase II transcription. This Schizosaccharomyces pombe (strain 972 / ATCC 24843) (Fission yeast) protein is RNA polymerase II transcription factor B subunit 3 (pmh1).